We begin with the raw amino-acid sequence, 554 residues long: GPI alpha-1,2-mannosyltransferase 3 (554 aa).

Asn-26 is a glycosylation site (N-linked (GlcNAc...) asparagine). 9 helical membrane-spanning segments follow: residues 63–83 (LLLF…TSFV), 136–156 (VQLL…VADV), 192–212 (LTNT…PLEG), 224–244 (LVAL…PLLF), 255–275 (DLIL…SLMI), 315–335 (GFPV…YLAP), 340–360 (ILLV…HKEF), 362–382 (FIYP…THLK), and 387–407 (PALS…GLVH). Asn-427 is a glycosylation site (N-linked (GlcNAc...) asparagine).

This sequence belongs to the glycosyltransferase 22 family. PIGB subfamily.

It is found in the endoplasmic reticulum membrane. The protein operates within glycolipid biosynthesis; glycosylphosphatidylinositol-anchor biosynthesis. Alpha-1,2-mannosyltransferase that catalyzes the transfer of the third mannose, via an alpha-1,2 bond, from a dolichol-phosphate-mannose (Dol-P-Man) to an alpha-D-Man-(1-&gt;6)-2-PEtn-alpha-D-Man-(1-&gt;4)-alpha-D-GlcN-(1-&gt;6)-(1-radyl,2-acyl-sn-glycero-3-phospho)-2-acyl-inositol intermediate to generate an alpha-D-Man-(1-&gt;2)-alpha-D-Man-(1-&gt;6)-2-PEtn-alpha-D-Man-(1-&gt;4)-alpha-D-GlcN-(1-&gt;6)-(1-radyl,2-acyl-sn-glycero-3-phospho)-2-acyl-inositol (also termed H6) and participates in the nineth step of the glycosylphosphatidylinositol-anchor biosynthesis. May also add the third mannose to an alpha-D-Man-(1-&gt;6)-alpha-D-Man-(1-&gt;4)-alpha-D-GlcN-(1-&gt;6)-(1-radyl,2-acyl-sn-glycero-3-phospho)-2-acyl-inositol (also termed H3) intermediate generating an alpha-D-Man-(1-&gt;2)-alpha-D-Man-(1-&gt;6)-alpha-D-Man-(1-&gt;4)-alpha-D-GlcN-(1-&gt;6)-(1-radyl,2-acyl-sn-glycero-3-phospho)-2-acyl-inositol (also termed H4). The polypeptide is GPI alpha-1,2-mannosyltransferase 3 (Homo sapiens (Human)).